The following is a 212-amino-acid chain: N-(5'-phosphoribosyl)anthranilate isomerase (212 aa).

The protein belongs to the TrpF family.

The catalysed reaction is N-(5-phospho-beta-D-ribosyl)anthranilate = 1-(2-carboxyphenylamino)-1-deoxy-D-ribulose 5-phosphate. It functions in the pathway amino-acid biosynthesis; L-tryptophan biosynthesis; L-tryptophan from chorismate: step 3/5. This is N-(5'-phosphoribosyl)anthranilate isomerase from Myxococcus xanthus (strain DK1622).